A 185-amino-acid polypeptide reads, in one-letter code: Ribosome-recycling factor (185 aa).

It belongs to the RRF family.

It is found in the cytoplasm. Its function is as follows. Responsible for the release of ribosomes from messenger RNA at the termination of protein biosynthesis. May increase the efficiency of translation by recycling ribosomes from one round of translation to another. The sequence is that of Ribosome-recycling factor from Thermosipho melanesiensis (strain DSM 12029 / CIP 104789 / BI429).